The chain runs to 267 residues: Ribosomal RNA small subunit methyltransferase A (267 aa).

6 residues coordinate S-adenosyl-L-methionine: histidine 13, leucine 15, glycine 40, glutamate 61, aspartate 85, and asparagine 105.

The protein belongs to the class I-like SAM-binding methyltransferase superfamily. rRNA adenine N(6)-methyltransferase family. RsmA subfamily.

The protein resides in the cytoplasm. It carries out the reaction adenosine(1518)/adenosine(1519) in 16S rRNA + 4 S-adenosyl-L-methionine = N(6)-dimethyladenosine(1518)/N(6)-dimethyladenosine(1519) in 16S rRNA + 4 S-adenosyl-L-homocysteine + 4 H(+). Functionally, specifically dimethylates two adjacent adenosines (A1518 and A1519) in the loop of a conserved hairpin near the 3'-end of 16S rRNA in the 30S particle. May play a critical role in biogenesis of 30S subunits. In Bacteroides thetaiotaomicron (strain ATCC 29148 / DSM 2079 / JCM 5827 / CCUG 10774 / NCTC 10582 / VPI-5482 / E50), this protein is Ribosomal RNA small subunit methyltransferase A.